The primary structure comprises 426 residues: 3-phosphoshikimate 1-carboxyvinyltransferase (426 aa).

3-phosphoshikimate contacts are provided by K22, S23, and R27. K22 provides a ligand contact to phosphoenolpyruvate. The phosphoenolpyruvate site is built by G96 and R124. 3-phosphoshikimate is bound by residues S170, S171, Q172, S198, D314, N337, and K341. Residue Q172 participates in phosphoenolpyruvate binding. Residue D314 is the Proton acceptor of the active site. Phosphoenolpyruvate is bound by residues R345, R387, and K412.

Belongs to the EPSP synthase family. As to quaternary structure, monomer.

Its subcellular location is the cytoplasm. It catalyses the reaction 3-phosphoshikimate + phosphoenolpyruvate = 5-O-(1-carboxyvinyl)-3-phosphoshikimate + phosphate. It functions in the pathway metabolic intermediate biosynthesis; chorismate biosynthesis; chorismate from D-erythrose 4-phosphate and phosphoenolpyruvate: step 6/7. Functionally, catalyzes the transfer of the enolpyruvyl moiety of phosphoenolpyruvate (PEP) to the 5-hydroxyl of shikimate-3-phosphate (S3P) to produce enolpyruvyl shikimate-3-phosphate and inorganic phosphate. The chain is 3-phosphoshikimate 1-carboxyvinyltransferase from Shewanella piezotolerans (strain WP3 / JCM 13877).